Consider the following 309-residue polypeptide: Glutamyl-Q tRNA(Asp) synthetase (309 aa).

Residues R8 to S12 and E44 contribute to the L-glutamate site. The 'HIGH' region motif lies at P11–S21. Residues C100, C102, Y126, and C130 each contribute to the Zn(2+) site. L-glutamate contacts are provided by Y205 and R223. A 'KMSKS' region motif is present at residues K261–Q265. K264 contacts ATP.

It belongs to the class-I aminoacyl-tRNA synthetase family. GluQ subfamily. Requires Zn(2+) as cofactor.

In terms of biological role, catalyzes the tRNA-independent activation of glutamate in presence of ATP and the subsequent transfer of glutamate onto a tRNA(Asp). Glutamate is transferred on the 2-amino-5-(4,5-dihydroxy-2-cyclopenten-1-yl) moiety of the queuosine in the wobble position of the QUC anticodon. The protein is Glutamyl-Q tRNA(Asp) synthetase of Albidiferax ferrireducens (strain ATCC BAA-621 / DSM 15236 / T118) (Rhodoferax ferrireducens).